A 354-amino-acid chain; its full sequence is UPF0283 membrane protein Meso_1416 (354 aa).

The disordered stretch occupies residues 1–28 (MSEPRRPAAFRIEPAPSPSPEATREDVR). 2 helical membrane passes run 71–91 (LGAVFVAALGMLVSLAAGLWA) and 105–125 (LGWLGAALVAVAALALFAIVV).

It belongs to the UPF0283 family.

The protein localises to the cell inner membrane. This is UPF0283 membrane protein Meso_1416 from Chelativorans sp. (strain BNC1).